The sequence spans 296 residues: NAD kinase (296 aa).

Asp-78 acts as the Proton acceptor in catalysis. NAD(+) contacts are provided by residues 78–79 (DG), 152–153 (ND), Arg-180, Asp-182, and Gln-251.

The protein belongs to the NAD kinase family. A divalent metal cation serves as cofactor.

The protein localises to the cytoplasm. It carries out the reaction NAD(+) + ATP = ADP + NADP(+) + H(+). Its function is as follows. Involved in the regulation of the intracellular balance of NAD and NADP, and is a key enzyme in the biosynthesis of NADP. Catalyzes specifically the phosphorylation on 2'-hydroxyl of the adenosine moiety of NAD to yield NADP. The polypeptide is NAD kinase (Neisseria meningitidis serogroup C (strain 053442)).